The following is a 181-amino-acid chain: Protein GrpE (181 aa).

A compositionally biased stretch (polar residues) spans 1 to 20 (MENTQENPASQSAEENGSET). The interval 1–39 (MENTQENPASQSAEENGSETQAAQDAAPAAEAADAALAE) is disordered. The span at 21 to 39 (QAAQDAAPAAEAADAALAE) shows a compositional bias: low complexity.

It belongs to the GrpE family. As to quaternary structure, homodimer.

It is found in the cytoplasm. In terms of biological role, participates actively in the response to hyperosmotic and heat shock by preventing the aggregation of stress-denatured proteins, in association with DnaK and GrpE. It is the nucleotide exchange factor for DnaK and may function as a thermosensor. Unfolded proteins bind initially to DnaJ; upon interaction with the DnaJ-bound protein, DnaK hydrolyzes its bound ATP, resulting in the formation of a stable complex. GrpE releases ADP from DnaK; ATP binding to DnaK triggers the release of the substrate protein, thus completing the reaction cycle. Several rounds of ATP-dependent interactions between DnaJ, DnaK and GrpE are required for fully efficient folding. This Burkholderia multivorans (strain ATCC 17616 / 249) protein is Protein GrpE.